A 739-amino-acid chain; its full sequence is Phosphoribosylformylglycinamidine synthase subunit PurL (739 aa).

The active site involves histidine 54. 2 residues coordinate ATP: tyrosine 57 and lysine 96. Glutamate 98 serves as a coordination point for Mg(2+). Residues 99 to 102 (SHNH) and arginine 121 contribute to the substrate site. Residue histidine 100 is the Proton acceptor of the active site. A Mg(2+)-binding site is contributed by aspartate 122. Position 245 (glutamine 245) interacts with substrate. A Mg(2+)-binding site is contributed by aspartate 275. 319–321 (ESQ) contributes to the substrate binding site. ATP contacts are provided by aspartate 504 and glycine 541. Asparagine 542 contributes to the Mg(2+) binding site. Position 544 (serine 544) interacts with substrate.

This sequence belongs to the FGAMS family. In terms of assembly, monomer. Part of the FGAM synthase complex composed of 1 PurL, 1 PurQ and 2 PurS subunits.

The protein resides in the cytoplasm. The enzyme catalyses N(2)-formyl-N(1)-(5-phospho-beta-D-ribosyl)glycinamide + L-glutamine + ATP + H2O = 2-formamido-N(1)-(5-O-phospho-beta-D-ribosyl)acetamidine + L-glutamate + ADP + phosphate + H(+). The protein operates within purine metabolism; IMP biosynthesis via de novo pathway; 5-amino-1-(5-phospho-D-ribosyl)imidazole from N(2)-formyl-N(1)-(5-phospho-D-ribosyl)glycinamide: step 1/2. Part of the phosphoribosylformylglycinamidine synthase complex involved in the purines biosynthetic pathway. Catalyzes the ATP-dependent conversion of formylglycinamide ribonucleotide (FGAR) and glutamine to yield formylglycinamidine ribonucleotide (FGAM) and glutamate. The FGAM synthase complex is composed of three subunits. PurQ produces an ammonia molecule by converting glutamine to glutamate. PurL transfers the ammonia molecule to FGAR to form FGAM in an ATP-dependent manner. PurS interacts with PurQ and PurL and is thought to assist in the transfer of the ammonia molecule from PurQ to PurL. The chain is Phosphoribosylformylglycinamidine synthase subunit PurL from Lactococcus lactis subsp. lactis (strain IL1403) (Streptococcus lactis).